We begin with the raw amino-acid sequence, 175 residues long: tRNA-acetylating toxin 3 (175 aa).

Residues Leu-95, Val-97, Gly-103, Gly-105, Gly-107, Ala-108, Asp-133, Gln-138, Asp-141, and Trp-142 each contribute to the acetyl-CoA site. Tyr-143 is an active-site residue. The acetyl-CoA site is built by Gly-145 and Phe-146.

Belongs to the acetyltransferase family. GNAT subfamily. Homodimer (in absence of antitoxin); has a condensed and elongated form. Forms a complex with cognate antitoxin TacA3. Forms a 4:2 antitoxin:toxin complex with cognate antitoxin TacA3. Forms a 4:4 antitoxin:toxin complex with promoter DNA, where 2 TacT3 dimers bridge 2 TacA3 dimers. Only TacA3 contacts promoter DNA in the octomeric form. TacT3 may contact DNA in the hexameric form.

The enzyme catalyses glycyl-tRNA(Gly) + acetyl-CoA = N-acetylglycyl-tRNA(Gly) + CoA + H(+). Its function is as follows. Toxic component of a type II toxin-antitoxin (TA) system. Acetylates tRNA and inhibits translation. Acetylates only Gly-tRNA on all 3 Gly-tRNA(Gly) isoacceptors in situ. In vitro acetylates mainly Ile/Leu and Gly. Overexpression during the lag phase of a tacA3-tacT3 deletion strain leads to a 150-fold increase in persister cells in the presence of cefotaxime and a non-growth state in the absence of antibiotic. Persister cell formation and the growth defect are neutralized by cognate antitoxin TacA3, but not by TacA1 or TacA2. Plays a role in persister cell formation. Functionally, the TacA3-TacT3 complex both represses and derepresses expression of its own operon. The hexameric 4:2 TacA3-TacT3 complex binds promoter DNA and represses its transcription; both subunits are required. The octomeric 4:4 TacA3-TacT3 complex derepresses the operon. The shift from hexameric to octomeric complex probably alters DNA-binding, leading to dissociation from the operator DNA and derepression. This Salmonella typhimurium (strain 14028s / SGSC 2262) protein is tRNA-acetylating toxin 3.